The following is a 422-amino-acid chain: Proline--tRNA ligase (422 aa).

It belongs to the class-II aminoacyl-tRNA synthetase family. ProS type 2 subfamily. In terms of assembly, homodimer.

It is found in the cytoplasm. It carries out the reaction tRNA(Pro) + L-proline + ATP = L-prolyl-tRNA(Pro) + AMP + diphosphate. Functionally, catalyzes the attachment of proline to tRNA(Pro) in a two-step reaction: proline is first activated by ATP to form Pro-AMP and then transferred to the acceptor end of tRNA(Pro). The chain is Proline--tRNA ligase from Wolbachia pipientis wMel.